Here is a 130-residue protein sequence, read N- to C-terminus: Histone H2A type 2-B (130 aa).

The segment at Met-1 to Ala-22 is disordered. The residue at position 2 (Ser-2) is an N-acetylserine. A Phosphoserine; by RPS6KA5 modification is found at Ser-2. Position 4 is a citrulline; alternate (Arg-4). Arg-4 carries the symmetric dimethylarginine; by PRMT5; alternate modification. Lys-6 carries the post-translational modification N6-(2-hydroxyisobutyryl)lysine. Residues Gln-7–Ser-19 are compositionally biased toward basic residues. At Lys-10 the chain carries N6-(2-hydroxyisobutyryl)lysine; alternate. Lys-10 and Lys-14 each carry N6-(beta-hydroxybutyryl)lysine; alternate. Lys-10 is modified (N6-lactoyllysine; alternate). Lys-10 carries the N6-succinyllysine; alternate modification. Lys-14 participates in a covalent cross-link: Glycyl lysine isopeptide (Lys-Gly) (interchain with G-Cter in ubiquitin); alternate. Lys-16 participates in a covalent cross-link: Glycyl lysine isopeptide (Lys-Gly) (interchain with G-Cter in ubiquitin). Lys-37 is modified (N6-(2-hydroxyisobutyryl)lysine; alternate). N6-(beta-hydroxybutyryl)lysine; alternate is present on Lys-37. Lys-37 carries the N6-crotonyllysine; alternate modification. N6-(2-hydroxyisobutyryl)lysine is present on residues Lys-75 and Lys-76. Lys-96 is modified (N6-(2-hydroxyisobutyryl)lysine; alternate). Lys-96 carries the post-translational modification N6-(beta-hydroxybutyryl)lysine; alternate. Position 96 is an N6-succinyllysine; alternate (Lys-96). An N6-glutaryllysine; alternate modification is found at Lys-96. Gln-105 is modified (N5-methylglutamine). Lys-119 carries the post-translational modification N6-(2-hydroxyisobutyryl)lysine; alternate. The residue at position 119 (Lys-119) is an N6-(beta-hydroxybutyryl)lysine; alternate. N6-crotonyllysine; alternate is present on residues Lys-119 and Lys-120. Lys-119 and Lys-120 each carry N6-glutaryllysine; alternate. Residue Lys-120 forms a Glycyl lysine isopeptide (Lys-Gly) (interchain with G-Cter in ubiquitin); alternate linkage. Position 121 is a phosphothreonine; by DCAF1 (Thr-121).

The protein belongs to the histone H2A family. As to quaternary structure, the nucleosome is a histone octamer containing two molecules each of H2A, H2B, H3 and H4 assembled in one H3-H4 heterotetramer and two H2A-H2B heterodimers. The octamer wraps approximately 147 bp of DNA. Deiminated on Arg-4 in granulocytes upon calcium entry. Post-translationally, monoubiquitination of Lys-120 (H2AK119Ub) by RING1, TRIM37 and RNF2/RING2 complex gives a specific tag for epigenetic transcriptional repression and participates in X chromosome inactivation of female mammals. It is involved in the initiation of both imprinted and random X inactivation. Ubiquitinated H2A is enriched in inactive X chromosome chromatin. Ubiquitination of H2A functions downstream of methylation of 'Lys-27' of histone H3 (H3K27me). H2AK119Ub by RNF2/RING2 can also be induced by ultraviolet and may be involved in DNA repair. Monoubiquitination of Lys-120 (H2AK119Ub) by TRIM37 may promote transformation of cells in a number of breast cancers. Following DNA double-strand breaks (DSBs), it is ubiquitinated through 'Lys-63' linkage of ubiquitin moieties by the E2 ligase UBE2N and the E3 ligases RNF8 and RNF168, leading to the recruitment of repair proteins to sites of DNA damage. Ubiquitination at Lys-14 and Lys-16 (H2AK13Ub and H2AK15Ub, respectively) in response to DNA damage is initiated by RNF168 that mediates monoubiquitination at these 2 sites, and 'Lys-63'-linked ubiquitin are then conjugated to monoubiquitin; RNF8 is able to extend 'Lys-63'-linked ubiquitin chains in vitro. Deubiquitinated by USP51 at Lys-14 and Lys-16 (H2AK13Ub and H2AK15Ub, respectively) after damaged DNA is repaired. H2AK119Ub and ionizing radiation-induced 'Lys-63'-linked ubiquitination (H2AK13Ub and H2AK15Ub) are distinct events. In terms of processing, phosphorylation on Ser-2 (H2AS1ph) is enhanced during mitosis. Phosphorylation on Ser-2 by RPS6KA5/MSK1 directly represses transcription. Acetylation of H3 inhibits Ser-2 phosphorylation by RPS6KA5/MSK1. Phosphorylation at Thr-121 (H2AT120ph) by DCAF1 is present in the regulatory region of many tumor suppresor genes and down-regulates their transcription. Symmetric dimethylation on Arg-4 by the PRDM1/PRMT5 complex may play a crucial role in the germ-cell lineage. Post-translationally, glutamine methylation at Gln-105 (H2AQ104me) by FBL is specifically dedicated to polymerase I. It is present at 35S ribosomal DNA locus and impairs binding of the FACT complex. In terms of processing, crotonylation (Kcr) is specifically present in male germ cells and marks testis-specific genes in post-meiotic cells, including X-linked genes that escape sex chromosome inactivation in haploid cells. Crotonylation marks active promoters and enhancers and confers resistance to transcriptional repressors. It is also associated with post-meiotically activated genes on autosomes. Lactylated in macrophages by EP300/P300 by using lactoyl-CoA directly derived from endogenous or exogenous lactate, leading to stimulates gene transcription.

It localises to the nucleus. The protein localises to the chromosome. Core component of nucleosome. Nucleosomes wrap and compact DNA into chromatin, limiting DNA accessibility to the cellular machineries which require DNA as a template. Histones thereby play a central role in transcription regulation, DNA repair, DNA replication and chromosomal stability. DNA accessibility is regulated via a complex set of post-translational modifications of histones, also called histone code, and nucleosome remodeling. The protein is Histone H2A type 2-B of Homo sapiens (Human).